A 252-amino-acid chain; its full sequence is Imidazole glycerol phosphate synthase subunit HisF (252 aa).

Active-site residues include D11 and D130.

This sequence belongs to the HisA/HisF family. As to quaternary structure, heterodimer of HisH and HisF.

Its subcellular location is the cytoplasm. It catalyses the reaction 5-[(5-phospho-1-deoxy-D-ribulos-1-ylimino)methylamino]-1-(5-phospho-beta-D-ribosyl)imidazole-4-carboxamide + L-glutamine = D-erythro-1-(imidazol-4-yl)glycerol 3-phosphate + 5-amino-1-(5-phospho-beta-D-ribosyl)imidazole-4-carboxamide + L-glutamate + H(+). Its pathway is amino-acid biosynthesis; L-histidine biosynthesis; L-histidine from 5-phospho-alpha-D-ribose 1-diphosphate: step 5/9. Its function is as follows. IGPS catalyzes the conversion of PRFAR and glutamine to IGP, AICAR and glutamate. The HisF subunit catalyzes the cyclization activity that produces IGP and AICAR from PRFAR using the ammonia provided by the HisH subunit. The sequence is that of Imidazole glycerol phosphate synthase subunit HisF from Thermococcus gammatolerans (strain DSM 15229 / JCM 11827 / EJ3).